We begin with the raw amino-acid sequence, 111 residues long: Ig heavy chain V-III region HPC76 (111 aa).

The region spanning 1 to 110 is the Ig-like domain; sequence ESGGGLVQPG…WGQGTTLTVS (110 aa).

In Mus musculus (Mouse), this protein is Ig heavy chain V-III region HPC76.